A 301-amino-acid chain; its full sequence is Pantothenate synthetase (301 aa).

30–37 contributes to the ATP binding site; that stretch reads MGNLHEGH. His37 serves as the catalytic Proton donor. Gln61 contacts (R)-pantoate. Gln61 is a beta-alanine binding site. 149–152 lines the ATP pocket; that stretch reads GEKD. Position 155 (Gln155) interacts with (R)-pantoate. ATP is bound by residues Val178 and 186–189; that span reads MSSR.

It belongs to the pantothenate synthetase family. In terms of assembly, homodimer.

The protein localises to the cytoplasm. The enzyme catalyses (R)-pantoate + beta-alanine + ATP = (R)-pantothenate + AMP + diphosphate + H(+). It functions in the pathway cofactor biosynthesis; (R)-pantothenate biosynthesis; (R)-pantothenate from (R)-pantoate and beta-alanine: step 1/1. Its function is as follows. Catalyzes the condensation of pantoate with beta-alanine in an ATP-dependent reaction via a pantoyl-adenylate intermediate. The sequence is that of Pantothenate synthetase from Vibrio vulnificus (strain YJ016).